Consider the following 239-residue polypeptide: Probable 2-phosphosulfolactate phosphatase (239 aa).

The protein belongs to the ComB family. Mg(2+) serves as cofactor.

It catalyses the reaction (2R)-O-phospho-3-sulfolactate + H2O = (2R)-3-sulfolactate + phosphate. In Clostridium botulinum (strain Okra / Type B1), this protein is Probable 2-phosphosulfolactate phosphatase.